The primary structure comprises 352 residues: DNA polymerase IV (352 aa).

The 182-residue stretch at 4-185 (IIHVDMDCFY…LPLEKIPGVG (182 aa)) folds into the UmuC domain. Mg(2+) is bound by residues Asp8 and Asp103. Glu104 is a catalytic residue.

It belongs to the DNA polymerase type-Y family. In terms of assembly, monomer. It depends on Mg(2+) as a cofactor.

The protein localises to the cytoplasm. The enzyme catalyses DNA(n) + a 2'-deoxyribonucleoside 5'-triphosphate = DNA(n+1) + diphosphate. Functionally, poorly processive, error-prone DNA polymerase involved in untargeted mutagenesis. Copies undamaged DNA at stalled replication forks, which arise in vivo from mismatched or misaligned primer ends. These misaligned primers can be extended by PolIV. Exhibits no 3'-5' exonuclease (proofreading) activity. May be involved in translesional synthesis, in conjunction with the beta clamp from PolIII. The protein is DNA polymerase IV of Pectobacterium atrosepticum (strain SCRI 1043 / ATCC BAA-672) (Erwinia carotovora subsp. atroseptica).